The following is a 148-amino-acid chain: D-aminoacyl-tRNA deacylase (148 aa).

Residues 137 to 138 (GP) carry the Gly-cisPro motif, important for rejection of L-amino acids motif.

The protein belongs to the DTD family. As to quaternary structure, homodimer.

Its subcellular location is the cytoplasm. The catalysed reaction is glycyl-tRNA(Ala) + H2O = tRNA(Ala) + glycine + H(+). It carries out the reaction a D-aminoacyl-tRNA + H2O = a tRNA + a D-alpha-amino acid + H(+). Functionally, an aminoacyl-tRNA editing enzyme that deacylates mischarged D-aminoacyl-tRNAs. Also deacylates mischarged glycyl-tRNA(Ala), protecting cells against glycine mischarging by AlaRS. Acts via tRNA-based rather than protein-based catalysis; rejects L-amino acids rather than detecting D-amino acids in the active site. By recycling D-aminoacyl-tRNA to D-amino acids and free tRNA molecules, this enzyme counteracts the toxicity associated with the formation of D-aminoacyl-tRNA entities in vivo and helps enforce protein L-homochirality. This chain is D-aminoacyl-tRNA deacylase, found in Ligilactobacillus salivarius (strain UCC118) (Lactobacillus salivarius).